The following is a 475-amino-acid chain: MSSQARTQTRAGFKAGVKDYRLTYYTPEYTPKETDILAAFRMTPQPGVPPEECAAAVAAESSTGTWTTVWTDGLTSLDRYKGRSYGFEPVPGEENQYICYVAYPLDLFEEGSVTNMLTSIVGNVFGFKALRALRLEDLRIPVGYSKTFQGPPHGITVERDKLNKYGRALLGCTIKPKLGLSAKNYGRAVYECLRGGLDFTKDDENVNSQPFMRWRDRFLYVMDAIKKSQAETGEIKGHYLNATAPTTEEMIKRAEFAAELDAPIIMHDYITAGFTSNTTLARWCRDNGPLLHIHRAMHAVIDRQKNHGIHFRVLAKTLRMSGGDHLHSGTVVGKLEGDRAGTLGFVDLMRDDHIEQDRSRGIFFTQDWASMPGVMPVASGGIHIWHMPALVDIFGDDSCLQFGGGTLGHPWGNAPGAVANRVALEACVQARNEGRNLAREGNEIIREAARFSPELAAACEVWKEIKFEFETIDTI.

2 residues coordinate substrate: Asn-123 and Thr-173. Catalysis depends on Lys-175, which acts as the Proton acceptor. Lys-177 is a substrate binding site. The Mg(2+) site is built by Lys-201, Asp-203, and Glu-204. An N6-carboxylysine modification is found at Lys-201. His-294 acts as the Proton acceptor in catalysis. 3 residues coordinate substrate: Arg-295, His-327, and Ser-379.

This sequence belongs to the RuBisCO large chain family. Type I subfamily. In terms of assembly, heterohexadecamer of 8 large chains and 8 small chains. It depends on Mg(2+) as a cofactor.

The protein resides in the plastid. It localises to the cyanelle. It catalyses the reaction 2 (2R)-3-phosphoglycerate + 2 H(+) = D-ribulose 1,5-bisphosphate + CO2 + H2O. The enzyme catalyses D-ribulose 1,5-bisphosphate + O2 = 2-phosphoglycolate + (2R)-3-phosphoglycerate + 2 H(+). Functionally, ruBisCO catalyzes two reactions: the carboxylation of D-ribulose 1,5-bisphosphate, the primary event in carbon dioxide fixation, as well as the oxidative fragmentation of the pentose substrate in the photorespiration process. Both reactions occur simultaneously and in competition at the same active site. The chain is Ribulose bisphosphate carboxylase large chain from Cyanophora paradoxa.